Consider the following 564-residue polypeptide: MRSDKIKKGVEQAPARSLLHATGQIKSPGDMDKPFIAICNSYIDIVPGHVHLRELADVAKEAIREAGGIPFEFNTIGVDDGIAMGHIGMRYSLPSREVIADAAETVINAHWFDGVFYIPNCDKITPGMLLASVRTNVPAIFCSGGPMKAGLSAHGKALTLSSVFEAVGAFKDGSMSQEDFLDMEANACPTCGSCAGMFTANSMNCLMEILGMAVPGNGTTLAVSDARRDLIRESAFHLMDLVKKDIRPRDIITKDAIDDAFALDMAMGGSTNTVLHTLALANEAGIEDYDLERINDIAKRVPYLSKIAPSSSYSMHDVHEAGGVSAIVKELVDLGGAIHPDRITVTGKTIRENVADAKINNTDVIHPKENPYSPVGGLSMLFGNIAPKGAAIKVGGVDPSVQVFKGEAICFSSHDEAVEAIDNHTVREGHVVVIRYEGPKGGPGMPEMLAPTSSIVGRGLGKDVALITDGRFSGATRGIAVGHISPEAAAGGPIALVHDGDIITIDLPNRTLNVDVPDEVLEERRKELPKFKAKVKTGYLARYTALVTSAHTGGILQIPEDLID.

Residue Asp-80 participates in Mg(2+) binding. Cys-121 contributes to the [2Fe-2S] cluster binding site. Mg(2+)-binding residues include Asp-122 and Lys-123. Lys-123 carries the post-translational modification N6-carboxylysine. [2Fe-2S] cluster is bound at residue Cys-194. Glu-447 contributes to the Mg(2+) binding site. The active-site Proton acceptor is the Ser-473.

It belongs to the IlvD/Edd family. As to quaternary structure, homodimer. It depends on [2Fe-2S] cluster as a cofactor. Mg(2+) serves as cofactor.

The catalysed reaction is (2R)-2,3-dihydroxy-3-methylbutanoate = 3-methyl-2-oxobutanoate + H2O. The enzyme catalyses (2R,3R)-2,3-dihydroxy-3-methylpentanoate = (S)-3-methyl-2-oxopentanoate + H2O. The protein operates within amino-acid biosynthesis; L-isoleucine biosynthesis; L-isoleucine from 2-oxobutanoate: step 3/4. It participates in amino-acid biosynthesis; L-valine biosynthesis; L-valine from pyruvate: step 3/4. Functions in the biosynthesis of branched-chain amino acids. Catalyzes the dehydration of (2R,3R)-2,3-dihydroxy-3-methylpentanoate (2,3-dihydroxy-3-methylvalerate) into 2-oxo-3-methylpentanoate (2-oxo-3-methylvalerate) and of (2R)-2,3-dihydroxy-3-methylbutanoate (2,3-dihydroxyisovalerate) into 2-oxo-3-methylbutanoate (2-oxoisovalerate), the penultimate precursor to L-isoleucine and L-valine, respectively. The polypeptide is Dihydroxy-acid dehydratase (Listeria monocytogenes serotype 4a (strain HCC23)).